The primary structure comprises 663 residues: Rap1 GTPase-activating protein 1 (663 aa).

The 17-residue stretch at 1-17 folds into the GoLoco domain; the sequence is MIEKMQGSRMDEQRCSF. Positions 1–23 are disordered; that stretch reads MIEKMQGSRMDEQRCSFPPPLKT. At F17 the chain carries Phosphoserine. A Rap-GAP domain is found at 181–397; it reads IVTFDEHVIS…RTRAALLETL (217 aa). S441 bears the Phosphoserine mark. Disordered regions lie at residues 442–604 and 616–645; these read MDAM…PHKR and SVSTTSGGSSPGPSRSPHPDAGKLGDPACP. Positions 450–465 are enriched in polar residues; that stretch reads KKPNTVSTSHSGSFAP. Phosphoserine occurs at positions 484, 499, 515, 541, and 542. Positions 535 to 549 are enriched in polar residues; sequence ENSSTQSSPEMPTTK. Residues 567 to 579 are compositionally biased toward low complexity; sequence RSSSSASSFASVV. Residues 580-591 show a composition bias toward acidic residues; it reads EETEGVDGEDTG. Over residues 616 to 630 the composition is skewed to low complexity; sequence SVSTTSGGSSPGPSR.

In terms of assembly, homodimer and heterodimer with RAP1B. In terms of tissue distribution, significant expression seen in the brain, kidney and pancreas. Abundant in the cerebral cortex and expressed at much lower levels in the spinal cord. Not detected in the lymphoid tissues.

The protein localises to the golgi apparatus membrane. In terms of biological role, GTPase activator for the nuclear Ras-related regulatory protein RAP-1A (KREV-1), converting it to the putatively inactive GDP-bound state. The polypeptide is Rap1 GTPase-activating protein 1 (RAP1GAP) (Homo sapiens (Human)).